The primary structure comprises 68 residues: Adipokinetic prohormone type 1 (68 aa).

The signal sequence occupies residues 1-20 (MNKIYFVIVFVACFCLFAEA). A Pyrrolidone carboxylic acid modification is found at Q21. G30 is subject to Glycine amide. The propeptide occupies 34–68 (SGVAPMSCKNEEAVATIFKLIQNEAERFIICQQKS).

Expressed in antennal lobe (AL), corpora cardiaca (CC), corpora allata (CA) and gnathal ganglion (GNG) (at protein level). Expression in CC and CA detected in all animals, expression in GNG in some animals and in AL in few animals (at protein level).

It localises to the secreted. In terms of biological role, this hormone, released from cells in the corpora cardiaca, causes release of diglycerides from the fat body and stimulation of muscles to use these diglycerides as an energy source during energy-demanding processes. The chain is Adipokinetic prohormone type 1 from Agrotis ipsilon (Black cutworm moth).